We begin with the raw amino-acid sequence, 385 residues long: Leucine aminopeptidase 1 (385 aa).

Positions 1–14 are cleaved as a signal peptide; it reads MKFLTLALSATATA. The propeptide occupies 15–85; that stretch reads MIIVNPEQQP…YGTLHTTRVV (71 aa). Zn(2+) is bound by residues His185, Asp204, Glu243, and Asp270. Cys319 and Cys323 are oxidised to a cystine. His352 contacts Zn(2+).

The protein belongs to the peptidase M28 family. M28E subfamily. In terms of assembly, monomer. Requires Zn(2+) as cofactor.

It is found in the secreted. Functionally, extracellular aminopeptidase that allows assimilation of proteinaceous substrates. The sequence is that of Leucine aminopeptidase 1 (lap1) from Penicillium rubens (strain ATCC 28089 / DSM 1075 / NRRL 1951 / Wisconsin 54-1255) (Penicillium chrysogenum).